The chain runs to 447 residues: Phosphoglucosamine mutase (447 aa).

The Phosphoserine intermediate role is filled by S108. Mg(2+)-binding residues include S108, D247, D249, and D251. S108 is modified (phosphoserine).

It belongs to the phosphohexose mutase family. Mg(2+) serves as cofactor. In terms of processing, activated by phosphorylation.

It carries out the reaction alpha-D-glucosamine 1-phosphate = D-glucosamine 6-phosphate. Its function is as follows. Catalyzes the conversion of glucosamine-6-phosphate to glucosamine-1-phosphate. The polypeptide is Phosphoglucosamine mutase (Bordetella avium (strain 197N)).